A 195-amino-acid polypeptide reads, in one-letter code: Peptidyl-tRNA hydrolase (195 aa).

Residue tyrosine 17 participates in tRNA binding. Catalysis depends on histidine 22, which acts as the Proton acceptor. Positions 68, 70, and 116 each coordinate tRNA.

This sequence belongs to the PTH family. In terms of assembly, monomer.

The protein resides in the cytoplasm. The catalysed reaction is an N-acyl-L-alpha-aminoacyl-tRNA + H2O = an N-acyl-L-amino acid + a tRNA + H(+). In terms of biological role, hydrolyzes ribosome-free peptidyl-tRNAs (with 1 or more amino acids incorporated), which drop off the ribosome during protein synthesis, or as a result of ribosome stalling. Its function is as follows. Catalyzes the release of premature peptidyl moieties from peptidyl-tRNA molecules trapped in stalled 50S ribosomal subunits, and thus maintains levels of free tRNAs and 50S ribosomes. This is Peptidyl-tRNA hydrolase from Shewanella frigidimarina (strain NCIMB 400).